We begin with the raw amino-acid sequence, 441 residues long: Protein translocase subunit SecY (441 aa).

10 consecutive transmembrane segments (helical) span residues 25-45 (YFVIFSLIVFRMGSYIPIPGI), 78-98 (IFALGIMPFISSSIIVQILTL), 126-146 (LILAALQSFGMSISLPNIPGL), 155-175 (ISFYGIAIISLITGTIFLMWL), 184-204 (IGNGISIIIFSGIVSGLPSSF), 218-238 (VLLFCFIGIVIFLVTLLVVYI), 275-295 (VIPAIFASSIVLFPATIASWF), 318-338 (YILTYITAIIFFCFFYTGLAF), 376-396 (FLGSMYMAFICLVPELMRFFM), and 398-418 (VPFYFGGTSLLIIVVVIIDFI).

Belongs to the SecY/SEC61-alpha family. As to quaternary structure, component of the Sec protein translocase complex. Heterotrimer consisting of SecY, SecE and SecG subunits. The heterotrimers can form oligomers, although 1 heterotrimer is thought to be able to translocate proteins. Interacts with the ribosome. Interacts with SecDF, and other proteins may be involved. Interacts with SecA.

The protein localises to the cell membrane. In terms of biological role, the central subunit of the protein translocation channel SecYEG. Consists of two halves formed by TMs 1-5 and 6-10. These two domains form a lateral gate at the front which open onto the bilayer between TMs 2 and 7, and are clamped together by SecE at the back. The channel is closed by both a pore ring composed of hydrophobic SecY resides and a short helix (helix 2A) on the extracellular side of the membrane which forms a plug. The plug probably moves laterally to allow the channel to open. The ring and the pore may move independently. This Buchnera aphidicola subsp. Baizongia pistaciae (strain Bp) protein is Protein translocase subunit SecY.